Reading from the N-terminus, the 621-residue chain is Chaperone protein HscA homolog (621 aa).

It belongs to the heat shock protein 70 family.

Functionally, chaperone involved in the maturation of iron-sulfur cluster-containing proteins. Has a low intrinsic ATPase activity which is markedly stimulated by HscB. This chain is Chaperone protein HscA homolog, found in Ralstonia nicotianae (strain ATCC BAA-1114 / GMI1000) (Ralstonia solanacearum).